We begin with the raw amino-acid sequence, 303 residues long: Glutamyl-Q tRNA(Asp) synthetase (303 aa).

L-glutamate contacts are provided by residues 9-13 and Glu45; that span reads RFAPS. Residues 12-22 carry the 'HIGH' region motif; it reads PSPTGAMHLGN. The Zn(2+) site is built by Cys100, Cys102, Tyr125, and Cys129. L-glutamate-binding residues include Tyr184 and Arg202. The short motif at 240–244 is the 'KMSKS' region element; that stretch reads RLAKR. Lys243 contributes to the ATP binding site.

The protein belongs to the class-I aminoacyl-tRNA synthetase family. GluQ subfamily. Requires Zn(2+) as cofactor.

Functionally, catalyzes the tRNA-independent activation of glutamate in presence of ATP and the subsequent transfer of glutamate onto a tRNA(Asp). Glutamate is transferred on the 2-amino-5-(4,5-dihydroxy-2-cyclopenten-1-yl) moiety of the queuosine in the wobble position of the QUC anticodon. The chain is Glutamyl-Q tRNA(Asp) synthetase from Deinococcus geothermalis (strain DSM 11300 / CIP 105573 / AG-3a).